A 671-amino-acid chain; its full sequence is Leucine aminopeptidase 2 (671 aa).

Substrate contacts are provided by residues 184–186 (QLE) and 311–316 (PYGGME). His-340 is a binding site for Zn(2+). The Proton acceptor role is filled by Glu-341. Residues His-344 and Glu-363 each contribute to the Zn(2+) site. Tyr-429 serves as the catalytic Proton donor.

It belongs to the peptidase M1 family. Zn(2+) serves as cofactor.

The protein resides in the cytoplasm. It is found in the nucleus. The catalysed reaction is an epoxide + H2O = an ethanediol. With respect to regulation, inhibited by 3-(4-benzyloxyphenyl)-2-(R)-amino-1-propanethiol (thioamine) and N-hydroxy-N-(2-(S)-amino-3-(4-benzyloxyphenyl)propyl)-5-carboxypen-tanamide (hydroxamic acid). The aminopeptidase activity is stimulated by LTA(4). Its function is as follows. Aminopeptidase that preferentially cleaves di- and tripeptides. Also has low epoxide hydrolase activity (in vitro). Can hydrolyze the epoxide leukotriene LTA(4) but it forms preferentially 5,6-dihydroxy-7,9,11,14-eicosatetraenoic acid rather than the cytokine leukotriene B(4) as the product compared to the homologous mammalian enzyme (in vitro). This chain is Leucine aminopeptidase 2, found in Saccharomyces cerevisiae (strain YJM789) (Baker's yeast).